The chain runs to 147 residues: SPI-1 type 3 secretion system pilotin (147 aa).

A signal peptide spans 1–15 (MKKFYSCLPVFLLIG). Cys-16 carries the N-palmitoyl cysteine lipid modification. Cys-16 is lipidated: S-diacylglycerol cysteine.

The protein belongs to the InvH family.

It localises to the cell outer membrane. In terms of biological role, involved in the synthesis of the type III secretion system (T3SS), also called injectisome, which is used to inject bacterial effector proteins into eukaryotic host cells. Pilot protein that is required for the proper localization of the secretin InvG/SctC in the outer membrane. Necessary for efficient adherence and entry of these organisms into cultured epithelial cells. This Salmonella typhimurium (strain SL1344) protein is SPI-1 type 3 secretion system pilotin.